The primary structure comprises 264 residues: Low molecular mass lipoprotein PBMHPC-23 (264 aa).

The signal sequence occupies residues 1 to 23 (MKFLVVFAVVRACVTPACAEMSA).

Belongs to the 30 kDa lipoprotein family.

The protein localises to the secreted. The protein is Low molecular mass lipoprotein PBMHPC-23 of Bombyx mori (Silk moth).